The sequence spans 737 residues: tRNA (guanine(27)-N(2))-dimethyltransferase (737 aa).

Over residues 1 to 10 the composition is skewed to acidic residues; sequence MENMAEEELL. The disordered stretch occupies residues 1–65; sequence MENMAEEELL…ASAPVPAPAL (65 aa). Low complexity predominate over residues 17–49; that stretch reads VVQVPVPTPTPDSARVPAPAPDSAPVSASTPAP. At threonine 24 the chain carries Phosphothreonine. Over residues 50-62 the composition is skewed to pro residues; the sequence is ASAPTPASAPVPA. Phosphoserine is present on serine 72. A Nucleolar localization signal motif is present at residues 141 to 145; sequence HKLHR. Residues 190–212 form a C2H2-type zinc finger; the sequence is YHCIICSATITRRTDMLGHVRRH. Residues 233–692 enclose the Trm1 methyltransferase domain; it reads EILKEADTDV…APLMQFKSIL (460 aa). S-adenosyl-L-methionine is bound by residues arginine 266, aspartate 313, aspartate 363, and alanine 364. Cysteine 494, cysteine 497, cysteine 519, and cysteine 521 together coordinate Zn(2+). Lysine 589 is covalently cross-linked (Glycyl lysine isopeptide (Lys-Gly) (interchain with G-Cter in SUMO2)). Residue serine 616 is modified to Phosphoserine.

Belongs to the class I-like SAM-binding methyltransferase superfamily. Trm1 family.

The protein localises to the nucleus. The protein resides in the nucleolus. The catalysed reaction is guanosine(27) in tRNA(Tyr) + 2 S-adenosyl-L-methionine = N(2)-dimethylguanosine(27) in tRNA(Tyr) + 2 S-adenosyl-L-homocysteine + 2 H(+). In terms of biological role, specifically dimethylates a single guanine residue at position 27 of tRNA(Tyr) using S-adenosyl-L-methionine as donor of the methyl groups. Dimethylation at position 27 of tRNA(Tyr) is required for efficient translation of tyrosine codons. Also required to maintain 3-(3-amino-3-carboxypropyl)uridine (acp3U) in the D-loop of several cytoplasmic tRNAs. This Bos taurus (Bovine) protein is tRNA (guanine(27)-N(2))-dimethyltransferase (TRMT1L).